The following is a 272-amino-acid chain: Dermonecrotic toxin LspaSicTox-alphaII1 (272 aa).

Histidine 5 is an active-site residue. Mg(2+)-binding residues include glutamate 25 and aspartate 27. Catalysis depends on histidine 41, which acts as the Nucleophile. Cystine bridges form between cysteine 45/cysteine 51 and cysteine 47/cysteine 190. Aspartate 85 contributes to the Mg(2+) binding site.

The protein belongs to the arthropod phospholipase D family. Class II subfamily. It depends on Mg(2+) as a cofactor. As to expression, expressed by the venom gland.

It localises to the secreted. It carries out the reaction an N-(acyl)-sphingosylphosphocholine = an N-(acyl)-sphingosyl-1,3-cyclic phosphate + choline. The catalysed reaction is an N-(acyl)-sphingosylphosphoethanolamine = an N-(acyl)-sphingosyl-1,3-cyclic phosphate + ethanolamine. The enzyme catalyses a 1-acyl-sn-glycero-3-phosphocholine = a 1-acyl-sn-glycero-2,3-cyclic phosphate + choline. It catalyses the reaction a 1-acyl-sn-glycero-3-phosphoethanolamine = a 1-acyl-sn-glycero-2,3-cyclic phosphate + ethanolamine. Functionally, dermonecrotic toxins cleave the phosphodiester linkage between the phosphate and headgroup of certain phospholipids (sphingolipid and lysolipid substrates), forming an alcohol (often choline) and a cyclic phosphate. This toxin acts on sphingomyelin (SM). It may also act on ceramide phosphoethanolamine (CPE), lysophosphatidylcholine (LPC) and lysophosphatidylethanolamine (LPE), but not on lysophosphatidylserine (LPS), and lysophosphatidylglycerol (LPG). It acts by transphosphatidylation, releasing exclusively cyclic phosphate products as second products. Induces dermonecrosis, hemolysis, increased vascular permeability, edema, inflammatory response, and platelet aggregation. This is Dermonecrotic toxin LspaSicTox-alphaII1 from Loxosceles spadicea (Recluse spider).